The primary structure comprises 182 residues: Mu-like prophage FluMu protein gp45 (182 aa).

Residues 159–182 (TDHQSSGISGKNHDHEERVGKPVP) form a disordered region. The segment covering 169–182 (KNHDHEERVGKPVP) has biased composition (basic and acidic residues).

To phage Mu protein gp45.

In Haemophilus influenzae (strain ATCC 51907 / DSM 11121 / KW20 / Rd), this protein is Mu-like prophage FluMu protein gp45.